Consider the following 462-residue polypeptide: Protein phosphatase 1M (462 aa).

The span at 1–10 shows a compositional bias: basic residues; it reads MSAGWFRRRF. The tract at residues 1-66 is disordered; that stretch reads MSAGWFRRRF…PVRSPARGRT (66 aa). A PPM-type phosphatase domain is found at 100-452; the sequence is EFGIEEDQEW…DDVSVFVIPL (353 aa). Mn(2+) contacts are provided by Asp-127 and Gly-128.

This sequence belongs to the PP2C family. It depends on Mg(2+) as a cofactor. Mn(2+) is required as a cofactor. In terms of tissue distribution, widely expressed with highest levels in testis and lower levels in lung, kidney and brain.

Its subcellular location is the nucleus. The enzyme catalyses O-phospho-L-seryl-[protein] + H2O = L-seryl-[protein] + phosphate. It carries out the reaction O-phospho-L-threonyl-[protein] + H2O = L-threonyl-[protein] + phosphate. The chain is Protein phosphatase 1M from Mus musculus (Mouse).